The chain runs to 31 residues: GSIPACGESCFKGKCYTPGCSCSKYPLCAKN.

A cross-link (cyclopeptide (Gly-Asn)) is located at residues 1–31 (GSIPACGESCFKGKCYTPGCSCSKYPLCAKN). Disulfide bonds link C6–C20, C10–C22, and C15–C28.

In terms of processing, this is a cyclic peptide. In terms of tissue distribution, expressed in leaves and petioles but not in petals, roots and runners (at protein level).

Probably participates in a plant defense mechanism. Has hemolytic activity. The polypeptide is Cycloviolacin-O14 (Viola odorata (Sweet violet)).